A 312-amino-acid polypeptide reads, in one-letter code: Elongation factor Ts (312 aa).

Residues 84 to 87 (TDFL) form an involved in Mg(2+) ion dislocation from EF-Tu region.

This sequence belongs to the EF-Ts family.

It is found in the cytoplasm. Associates with the EF-Tu.GDP complex and induces the exchange of GDP to GTP. It remains bound to the aminoacyl-tRNA.EF-Tu.GTP complex up to the GTP hydrolysis stage on the ribosome. The polypeptide is Elongation factor Ts (Caulobacter sp. (strain K31)).